We begin with the raw amino-acid sequence, 102 residues long: Small ribosomal subunit protein uS10 (102 aa).

It belongs to the universal ribosomal protein uS10 family. Part of the 30S ribosomal subunit.

In terms of biological role, involved in the binding of tRNA to the ribosomes. This chain is Small ribosomal subunit protein uS10, found in Salinispora tropica (strain ATCC BAA-916 / DSM 44818 / JCM 13857 / NBRC 105044 / CNB-440).